A 211-amino-acid chain; its full sequence is Nucleoside triphosphate pyrophosphatase (211 aa).

The Proton acceptor role is filled by aspartate 78.

It belongs to the Maf family. A divalent metal cation is required as a cofactor.

Its subcellular location is the cytoplasm. The catalysed reaction is a ribonucleoside 5'-triphosphate + H2O = a ribonucleoside 5'-phosphate + diphosphate + H(+). It carries out the reaction a 2'-deoxyribonucleoside 5'-triphosphate + H2O = a 2'-deoxyribonucleoside 5'-phosphate + diphosphate + H(+). Functionally, nucleoside triphosphate pyrophosphatase. May have a dual role in cell division arrest and in preventing the incorporation of modified nucleotides into cellular nucleic acids. This Mycolicibacterium smegmatis (strain ATCC 700084 / mc(2)155) (Mycobacterium smegmatis) protein is Nucleoside triphosphate pyrophosphatase.